The sequence spans 396 residues: Elongation factor Tu (396 aa).

The tr-type G domain maps to lysine 10–glutamate 206. Residues glycine 19–threonine 26 form a G1 region. Position 19-26 (glycine 19–threonine 26) interacts with GTP. Threonine 26 is a binding site for Mg(2+). A G2 region spans residues glycine 60–serine 64. The segment at aspartate 81–glycine 84 is G3. GTP-binding positions include aspartate 81 to histidine 85 and asparagine 136 to aspartate 139. Residues asparagine 136–aspartate 139 are G4. Residues serine 174–leucine 176 are G5.

Belongs to the TRAFAC class translation factor GTPase superfamily. Classic translation factor GTPase family. EF-Tu/EF-1A subfamily. Monomer.

Its subcellular location is the cytoplasm. The enzyme catalyses GTP + H2O = GDP + phosphate + H(+). Functionally, GTP hydrolase that promotes the GTP-dependent binding of aminoacyl-tRNA to the A-site of ribosomes during protein biosynthesis. The polypeptide is Elongation factor Tu (Gluconobacter oxydans (strain 621H) (Gluconobacter suboxydans)).